The primary structure comprises 163 residues: Nucleotide-binding protein cbdbA1256 (163 aa).

Belongs to the YajQ family.

In terms of biological role, nucleotide-binding protein. In Dehalococcoides mccartyi (strain CBDB1), this protein is Nucleotide-binding protein cbdbA1256.